Reading from the N-terminus, the 180-residue chain is Probable DNA replication complex GINS protein PSF2 (180 aa).

Belongs to the GINS2/PSF2 family. In terms of assembly, component of the GINS complex which is a heterotetramer of gins1, gins2, gins3 and gins4.

Its subcellular location is the nucleus. Functionally, required for correct functioning of the GINS complex, a complex that plays an essential role in the initiation of DNA replication, and progression of DNA replication forks. GINS complex is a core component of CDC45-MCM-GINS (CMG) helicase, the molecular machine that unwinds template DNA during replication, and around which the replisome is built. This Caenorhabditis elegans protein is Probable DNA replication complex GINS protein PSF2 (psf-2).